The chain runs to 676 residues: Phosphatidylinositol-3,5-bisphosphate 3-phosphatase MTMR6 (676 aa).

The 377-residue stretch at 125-501 folds into the Myotubularin phosphatase domain; sequence GWRRLDWNSE…ARFTVWTAMY (377 aa). A 1,2-diacyl-sn-glycero-3-phospho-(1D-myo-inositol-3,5-bisphosphate)-binding residues include asparagine 249, asparagine 274, and isoleucine 275. Residues asparagine 249, asparagine 274, and isoleucine 275 each coordinate a 1,2-diacyl-sn-glycero-3-phospho-(1D-myo-inositol-3-phosphate). Substrate is bound by residues 249–252, 274–275, and 335–341; these read NKVQ, NI, and CSDGWDR. Cysteine 335 (phosphocysteine intermediate) is an active-site residue. Residues serine 336, aspartate 337, glycine 338, tryptophan 339, aspartate 340, arginine 341, lysine 377, and arginine 381 each coordinate a 1,2-diacyl-sn-glycero-3-phospho-(1D-myo-inositol-3,5-bisphosphate). Serine 336, aspartate 337, glycine 338, tryptophan 339, aspartate 340, and arginine 341 together coordinate a 1,2-diacyl-sn-glycero-3-phospho-(1D-myo-inositol-3-phosphate). Arginine 381 provides a ligand contact to a 1,2-diacyl-sn-glycero-3-phospho-(1D-myo-inositol-3-phosphate). Arginine 381 serves as a coordination point for substrate. The FYVE-type zinc finger occupies 618–675; that stretch reads KWQPLRGADRCSNPACRGEFSSTIERRIHCHLCGMIFCRRCLKVSADERERVCDKCKT.

It belongs to the protein-tyrosine phosphatase family. Non-receptor class myotubularin subfamily. As to quaternary structure, heterodimer with mtm-9. Expressed in intestinal cells. Expressed in head neurons, pre-anal ganglion, hypodermal cells, anal depressor muscle and non-neuronal cells in the tail.

It localises to the cytoplasm. The protein localises to the membrane. It is found in the apical cell membrane. The enzyme catalyses a 1,2-diacyl-sn-glycero-3-phospho-(1D-myo-inositol-3,5-bisphosphate) + H2O = a 1,2-diacyl-sn-glycero-3-phospho-(1D-myo-inositol-5-phosphate) + phosphate. It catalyses the reaction a 1,2-diacyl-sn-glycero-3-phospho-(1D-myo-inositol-3-phosphate) + H2O = a 1,2-diacyl-sn-glycero-3-phospho-(1D-myo-inositol) + phosphate. The catalysed reaction is 1,2-dioctanoyl-sn-glycero-3-phospho-(1D-myo-inositol-3,5-bisphosphate) + H2O = 1,2-dioctanoyl-sn-glycero-3-phospho-(1D-myo-inositol-5-phosphate) + phosphate. It carries out the reaction 1,2-dioctanoyl-sn-glycero-3-phospho-(1-D-myo-inositol-3-phosphate) + H2O = 1,2-dioctanoyl-sn-glycero-3-phospho-(1D-myo-inositol) + phosphate. Functionally, probable lipid phosphatase that specifically dephosphorylates the D-3 position of phosphatidylinositol 3-phosphate and phosphatidylinositol 3,5-bisphosphate, generating phosphatidylinositol and phosphatidylinositol 5-phosphate. In association with mtm-9, plays a role in endosome trafficking probably by regulating phosphatidylinositol-3-phosphate levels. Regulates fluid phase endocytosis in coelomocytes. Controls the endosomal localization of sorting nexin snx-3 and the levels of sorting receptor mig-14. By regulating the retrograde transport of mig-14, may be involved in the secretion of Wnt ligands such as egl-20. Regulates posterior migration of QL neuroblast descendants and the anterior migration of QR neuroblast descendants and HSN neurons during larval development. Involved in the formation of correct synapse number in DA9 motor neurons probably in part by regulating the secretion of Wnt ligand egl-20. This chain is Phosphatidylinositol-3,5-bisphosphate 3-phosphatase MTMR6, found in Caenorhabditis elegans.